A 363-amino-acid polypeptide reads, in one-letter code: S-adenosylmethionine:tRNA ribosyltransferase-isomerase (363 aa).

This sequence belongs to the QueA family. Monomer.

The protein resides in the cytoplasm. The enzyme catalyses 7-aminomethyl-7-carbaguanosine(34) in tRNA + S-adenosyl-L-methionine = epoxyqueuosine(34) in tRNA + adenine + L-methionine + 2 H(+). The protein operates within tRNA modification; tRNA-queuosine biosynthesis. Transfers and isomerizes the ribose moiety from AdoMet to the 7-aminomethyl group of 7-deazaguanine (preQ1-tRNA) to give epoxyqueuosine (oQ-tRNA). This Synechococcus sp. (strain RCC307) protein is S-adenosylmethionine:tRNA ribosyltransferase-isomerase.